The chain runs to 162 residues: Large ribosomal subunit protein uL30 (162 aa).

It belongs to the universal ribosomal protein uL30 family. In terms of assembly, part of the 50S ribosomal subunit.

In Staphylothermus marinus (strain ATCC 43588 / DSM 3639 / JCM 9404 / F1), this protein is Large ribosomal subunit protein uL30.